The following is a 228-amino-acid chain: L-ribulose-5-phosphate 4-epimerase UlaF (228 aa).

Substrate contacts are provided by residues 26-27 (GN), 43-44 (SG), and 72-73 (SS). Zn(2+) contacts are provided by aspartate 74, histidine 93, and histidine 95. Aspartate 118 (proton donor/acceptor) is an active-site residue. Residue histidine 167 coordinates Zn(2+). The active-site Proton donor/acceptor is the tyrosine 225.

Belongs to the aldolase class II family. AraD/FucA subfamily. The cofactor is Zn(2+).

The catalysed reaction is L-ribulose 5-phosphate = D-xylulose 5-phosphate. It participates in cofactor degradation; L-ascorbate degradation; D-xylulose 5-phosphate from L-ascorbate: step 4/4. Its function is as follows. Catalyzes the isomerization of L-ribulose 5-phosphate to D-xylulose 5-phosphate. Is involved in the anaerobic L-ascorbate utilization. The polypeptide is L-ribulose-5-phosphate 4-epimerase UlaF (Shigella dysenteriae serotype 1 (strain Sd197)).